A 511-amino-acid chain; its full sequence is ADP,ATP carrier protein 4 (511 aa).

12 consecutive transmembrane segments (helical) span residues 34–54, 70–90, 102–122, 157–177, 192–212, 231–251, 296–316, 330–350, 361–381, 390–410, 453–473, and 476–496; these read VSKFLFITLLMFCILFIQNLI, IISFLKFWGVMPSAFLMTAIY, IFYLIISIFLTFFALFAYVIF, FSLFYIIAELWPNVVFALLFW, FYPLFGLLSQTGIYLAGQFLE, FHTLSIQIILTIVLILGIIAI, LIATLLICYGIAINLVEGPWK, AAFIGSYLSYTGVFTILFVVL, FTAAVITPLIVFITGILFFAV, LIIANFILTDPALIAITIGAI, LGKSGSAFLQSLVFIILPSAS, and SISTCLMIIFIITCLTWLWAT.

It belongs to the ADP/ATP translocase tlc family.

It is found in the cell membrane. Functionally, provides the rickettsial cell with host ATP in exchange for rickettsial ADP. This is an obligate exchange system. This energy acquiring activity is an important component of rickettsial parasitism. This chain is ADP,ATP carrier protein 4 (tlcD), found in Rickettsia conorii (strain ATCC VR-613 / Malish 7).